We begin with the raw amino-acid sequence, 243 residues long: Probable transcriptional regulatory protein Bpet3099 (243 aa).

The interval 1 to 21 is disordered; it reads MAGHSKWANIQHRKGRQDAKR.

The protein belongs to the TACO1 family.

Its subcellular location is the cytoplasm. The chain is Probable transcriptional regulatory protein Bpet3099 from Bordetella petrii (strain ATCC BAA-461 / DSM 12804 / CCUG 43448).